Reading from the N-terminus, the 223-residue chain is MKGILGRKVEMTQVFTNSGQLVPVTVVEVLPNTVLQVKTIDSDGYVAVQLGTTDKRVNLVNKPELGHFKKANSNPKRFVKEIRNMQGYEIGQVINVSDIFVSGEYVDVTGISKGKGFAGGIKRHNYSRGPMAHGSGYHRGIGSMGAIINRIFKSKKMPGHMGNAKRTIQNLEIIAIDQSNNIMLIKGSIPGPKNSFVQIKQNVKGMSSKQAVELLNRNASVQA.

It belongs to the universal ribosomal protein uL3 family. Part of the 50S ribosomal subunit. Forms a cluster with proteins L14 and L19.

One of the primary rRNA binding proteins, it binds directly near the 3'-end of the 23S rRNA, where it nucleates assembly of the 50S subunit. This chain is Large ribosomal subunit protein uL3, found in Mycoplasma capricolum subsp. capricolum (strain California kid / ATCC 27343 / NCTC 10154).